The following is a 375-amino-acid chain: Queuine tRNA-ribosyltransferase (375 aa).

The active-site Proton acceptor is D90. Residues 90-94 (DSGGF), D144, Q190, and G217 contribute to the substrate site. The RNA binding stretch occupies residues 248–254 (GIGTPHY). The active-site Nucleophile is D267. Positions 272 to 276 (TRIAR) are RNA binding; important for wobble base 34 recognition. The Zn(2+) site is built by C305, C307, C310, and H336.

The protein belongs to the queuine tRNA-ribosyltransferase family. In terms of assembly, homodimer. Within each dimer, one monomer is responsible for RNA recognition and catalysis, while the other monomer binds to the replacement base PreQ1. Zn(2+) is required as a cofactor.

It catalyses the reaction 7-aminomethyl-7-carbaguanine + guanosine(34) in tRNA = 7-aminomethyl-7-carbaguanosine(34) in tRNA + guanine. The protein operates within tRNA modification; tRNA-queuosine biosynthesis. In terms of biological role, catalyzes the base-exchange of a guanine (G) residue with the queuine precursor 7-aminomethyl-7-deazaguanine (PreQ1) at position 34 (anticodon wobble position) in tRNAs with GU(N) anticodons (tRNA-Asp, -Asn, -His and -Tyr). Catalysis occurs through a double-displacement mechanism. The nucleophile active site attacks the C1' of nucleotide 34 to detach the guanine base from the RNA, forming a covalent enzyme-RNA intermediate. The proton acceptor active site deprotonates the incoming PreQ1, allowing a nucleophilic attack on the C1' of the ribose to form the product. After dissociation, two additional enzymatic reactions on the tRNA convert PreQ1 to queuine (Q), resulting in the hypermodified nucleoside queuosine (7-(((4,5-cis-dihydroxy-2-cyclopenten-1-yl)amino)methyl)-7-deazaguanosine). The protein is Queuine tRNA-ribosyltransferase of Borrelia hermsii (strain HS1 / DAH).